The sequence spans 198 residues: Probable molybdenum cofactor guanylyltransferase (198 aa).

GTP-binding positions include 9 to 11, K22, D66, and D95; that span reads LAG. D95 provides a ligand contact to Mg(2+).

Belongs to the MobA family. The cofactor is Mg(2+).

It localises to the cytoplasm. It catalyses the reaction Mo-molybdopterin + GTP + H(+) = Mo-molybdopterin guanine dinucleotide + diphosphate. Transfers a GMP moiety from GTP to Mo-molybdopterin (Mo-MPT) cofactor (Moco or molybdenum cofactor) to form Mo-molybdopterin guanine dinucleotide (Mo-MGD) cofactor. This is Probable molybdenum cofactor guanylyltransferase from Clostridium perfringens (strain ATCC 13124 / DSM 756 / JCM 1290 / NCIMB 6125 / NCTC 8237 / Type A).